The chain runs to 119 residues: Large ribosomal subunit protein bL20 (119 aa).

It belongs to the bacterial ribosomal protein bL20 family.

Functionally, binds directly to 23S ribosomal RNA and is necessary for the in vitro assembly process of the 50S ribosomal subunit. It is not involved in the protein synthesizing functions of that subunit. This is Large ribosomal subunit protein bL20 from Colwellia psychrerythraea (strain 34H / ATCC BAA-681) (Vibrio psychroerythus).